Consider the following 375-residue polypeptide: Protein arginine N-methyltransferase 6 (375 aa).

Positions 1–36 (MSQPKRRKLESGGGGEGGEGTEEEDGGELEVAVPRP) are disordered. Over residues 19-28 (EGTEEEDGGE) the composition is skewed to acidic residues. T21 carries the post-translational modification Phosphothreonine. At R38 the chain carries Asymmetric dimethylarginine; by autocatalysis. The SAM-dependent MTase PRMT-type domain maps to 44–374 (DQLYYQCYSD…EEKTKDFAME (331 aa)). Positions 57, 66, 90, 112, and 141 each coordinate S-adenosyl-L-methionine. Active-site residues include E155 and E164.

Belongs to the class I-like SAM-binding methyltransferase superfamily. Protein arginine N-methyltransferase family. PRMT6 subfamily. In terms of assembly, interacts with (and methylates) HIV-1 Tat, Rev and Nucleocapsid protein p7 (NC). Interacts with EPB41L3 and NCOA1. Post-translationally, automethylation enhances its stability.

It is found in the nucleus. It carries out the reaction L-arginyl-[protein] + 2 S-adenosyl-L-methionine = N(omega),N(omega)-dimethyl-L-arginyl-[protein] + 2 S-adenosyl-L-homocysteine + 2 H(+). Functionally, arginine methyltransferase that can catalyze the formation of both omega-N monomethylarginine (MMA) and asymmetrical dimethylarginine (aDMA), with a strong preference for the formation of aDMA. Preferentially methylates arginyl residues present in a glycine and arginine-rich domain and displays preference for monomethylated substrates. Specifically mediates the asymmetric dimethylation of histone H3 'Arg-2' to form H3R2me2a. H3R2me2a represents a specific tag for epigenetic transcriptional repression and is mutually exclusive with methylation on histone H3 'Lys-4' (H3K4me2 and H3K4me3). Acts as a transcriptional repressor of various genes such as HOXA2, THBS1 and TP53. Repression of TP53 blocks cellular senescence. Also methylates histone H2A and H4 'Arg-3' (H2AR3me and H4R3me, respectively). Acts as a regulator of DNA base excision during DNA repair by mediating the methylation of DNA polymerase beta (POLB), leading to the stimulation of its polymerase activity by enhancing DNA binding and processivity. Methylates HMGA1. Regulates alternative splicing events. Acts as a transcriptional coactivator of a number of steroid hormone receptors including ESR1, ESR2, PGR and NR3C1. Promotes fasting-induced transcriptional activation of the gluconeogenic program through methylation of the CRTC2 transcription coactivator. Methylates GPS2, protecting GPS2 from ubiquitination and degradation. Methylates SIRT7, inhibiting SIRT7 histone deacetylase activity and promoting mitochondria biogenesis. The chain is Protein arginine N-methyltransferase 6 (PRMT6) from Bos taurus (Bovine).